Consider the following 101-residue polypeptide: Protein RnfH (101 aa).

The protein belongs to the UPF0125 (RnfH) family.

In Coxiella burnetii (strain RSA 331 / Henzerling II), this protein is Protein RnfH.